The primary structure comprises 464 residues: RCC1-like G exchanging factor-like protein (464 aa).

A mitochondrion-targeting transit peptide spans methionine 1 to glutamate 37. RCC1 repeat units lie at residues alanine 58–lysine 124, valine 128–aspartate 191, glutamate 193–aspartate 247, lysine 248–alanine 300, glycine 302–glycine 353, glutamate 354–asparagine 411, and lysine 412–lysine 461.

Forms a regulatory protein-RNA complex, consisting of RCC1L, NGRN, RPUSD3, RPUSD4, TRUB2, FASTKD2 and 16S mt-rRNA. Interacts with 16S mt-rRNA; this interaction is direct. Interacts with OPA1; this interaction is direct. In terms of assembly, asociates with the mitochondrial ribosome large subunit (mt-LSU). As to quaternary structure, asociates with the mitochondrial ribosome small subunit (mt-SSU). In terms of tissue distribution, ubiquitous.

Its subcellular location is the mitochondrion membrane. It localises to the mitochondrion inner membrane. Functionally, guanine nucleotide exchange factor (GEF) for mitochondrial dynamin-related GTPase OPA1. Activates OPA1, by exchanging bound GDP for free GTP, and drives OPA1 and MFN1-dependent mitochondrial fusion. Plays an essential role in mitochondrial ribosome biogenesis. As a component of a functional protein-RNA module, consisting of RCC1L, NGRN, RPUSD3, RPUSD4, TRUB2, FASTKD2 and 16S mitochondrial ribosomal RNA (16S mt-rRNA), controls 16S mt-rRNA abundance and is required for intra-mitochondrial translation of core subunits of the oxidative phosphorylation system. In terms of biological role, plays an essential role in mitochondrial ribosome biogenesis via its association with GTPases that play a role in the assembly of the large ribosome subunit. Plays an essential role in mitochondrial ribosome biogenesis via its association with GTPases that play a role in the assembly of the small ribosome subunit. This is RCC1-like G exchanging factor-like protein from Homo sapiens (Human).